An 873-amino-acid chain; its full sequence is Rho GTPase-activating protein gacJJ (873 aa).

The segment at 64 to 147 is disordered; the sequence is DEPSSINTSS…NVNNSSNAPT (84 aa). Low complexity predominate over residues 66-91; it reads PSSINTSSGNIGSNNNSSSNTPLTGS. A compositionally biased stretch (gly residues) spans 103–112; that stretch reads IGGGGGGGDN. Residues 113–144 show a composition bias toward low complexity; that stretch reads GITNSGNIGSSSNSDLKKSTSSGIVNVNNSSN. Residues 301-402 form the PH domain; it reads NPVREGYLKK…WTVLPIVIES (102 aa). Positions 428 to 621 constitute a Rho-GAP domain; that stretch reads VPIEKTVSGN…SLIRDYQYIF (194 aa). Positions 628–694 constitute an SH3 domain; the sequence is EQKILAKSLY…PASYVELLPH (67 aa). A coiled-coil region spans residues 715-761; that stretch reads MLEMESTKTKNQEIDKNIKQLEITKKELESTINDLENEKAALENDPT.

The protein resides in the cytoplasm. In terms of biological role, rho GTPase-activating protein involved in the signal transduction pathway. The protein is Rho GTPase-activating protein gacJJ (gacJJ) of Dictyostelium discoideum (Social amoeba).